We begin with the raw amino-acid sequence, 745 residues long: Eukaryotic translation initiation factor 3 subunit B (745 aa).

The RRM domain maps to 41–129; sequence DVIVIEGVPV…HRFSVHRFTD (89 aa). 4 WD repeats span residues 189–230, 251–293, 303–344, and 580–625; these read EHSR…RFMR, WSHE…RSFP, GQLK…LLEK, and GEHY…LQKH. Residues 644–745 adopt a coiled-coil conformation; that stretch reads GKDEQKRVRK…IIEETEEVLA (102 aa).

It belongs to the eIF-3 subunit B family. Component of the eukaryotic translation initiation factor 3 (eIF-3) complex.

Its subcellular location is the cytoplasm. In terms of biological role, RNA-binding component of the eukaryotic translation initiation factor 3 (eIF-3) complex, which is involved in protein synthesis of a specialized repertoire of mRNAs and, together with other initiation factors, stimulates binding of mRNA and methionyl-tRNAi to the 40S ribosome. The eIF-3 complex specifically targets and initiates translation of a subset of mRNAs involved in cell proliferation. In Mycosarcoma maydis (Corn smut fungus), this protein is Eukaryotic translation initiation factor 3 subunit B.